The chain runs to 86 residues: MATKKAGGSSRNGRDSAGRRLGVKKADGQYVIPGNIIVRQRGTKIHPGTNVGLGKDHTIFALIEGRVEFLTKRNHKIVNVKEIAST.

The tract at residues 1–24 is disordered; that stretch reads MATKKAGGSSRNGRDSAGRRLGVK.

It belongs to the bacterial ribosomal protein bL27 family.

The sequence is that of Large ribosomal subunit protein bL27 from Rickettsia conorii (strain ATCC VR-613 / Malish 7).